The chain runs to 331 residues: D-alanine--D-alanine ligase (331 aa).

An ATP-grasp domain is found at 116–316; sequence KRQWQTHGLP…YEDFVLQLAA (201 aa). 142–197 is a binding site for ATP; it reads ADRLGLPLIVKPAREGSSIGLTKVTSVAELPAAYEKAARLDRDVMAEQFIEGDELT. Positions 269, 283, and 285 each coordinate Mg(2+).

It belongs to the D-alanine--D-alanine ligase family. Requires Mg(2+) as cofactor. Mn(2+) serves as cofactor.

The protein localises to the cytoplasm. It carries out the reaction 2 D-alanine + ATP = D-alanyl-D-alanine + ADP + phosphate + H(+). It participates in cell wall biogenesis; peptidoglycan biosynthesis. In terms of biological role, cell wall formation. This chain is D-alanine--D-alanine ligase, found in Ralstonia pickettii (strain 12J).